Here is a 51-residue protein sequence, read N- to C-terminus: Light-harvesting protein B800/850/890 beta-2 chain (51 aa).

The Cytoplasmic segment spans residues 1-17 (ADEMRNVSDEEAKEFHA). A bacteriochlorophyll contacts are provided by His-16 and His-34. A helical membrane pass occupies residues 18–40 (MFSQAFTVYVGVAVVAHILAWAW). The Periplasmic portion of the chain corresponds to 41 to 51 (RPWIPGDEGFG).

This sequence belongs to the antenna complex beta subunit family. The core complex is formed by different alpha and beta chains, binding bacteriochlorophyll molecules, and arranged most probably in tetrameric structures disposed around the reaction center. The non-pigmented gamma chains may constitute additional components.

The protein resides in the cell inner membrane. Its function is as follows. Antenna complexes are light-harvesting systems, which transfer the excitation energy to the reaction centers. This chain is Light-harvesting protein B800/850/890 beta-2 chain, found in Halorhodospira halophila (strain DSM 244 / SL1) (Ectothiorhodospira halophila (strain DSM 244 / SL1)).